The chain runs to 460 residues: MLTIYNTLSKAKETFKPLDGNKVRMYVCGMTVYDYCHLGHGRSMVAFDLVTRWLRKSGYDLTYVRNITDIDDKIINRANENGETFDALTARMIDAMHEDERRLNILPPDQEPRATDHIAGMHAMIQTLIDKGYAYAPGNGDVYYRVGKFVGYGKLSRKKIEDLRIGARIEVDEAKQDPLDFVLWKGVKPGEPSWESPWGPGRPGWHIECSVMSTCCLGESFDIHGGGSDLEFPHHENEIAQSEAATGKQYANAWMHCGMIRINGEKMSKSLNNFFTIRDVLEKYHPEVVRYLLVASHYRSAINYSEDSLRDAKGALERFYHALRGLPRVAAKGGEAFVERFSMAMNDDFGTPEACAVLFDLVREINRLRDSDLEAAAGLAGRLRELGDVLGVLQLEADDFLRAGAEGKVDAAEVEGLIQARLQARTDKNWAESDRIRDQLTAMGVVLEDSKGATTWRLAD.

Cysteine 28 is a Zn(2+) binding site. The 'HIGH' region signature appears at methionine 30–histidine 40. Residues cysteine 209, histidine 234, and glutamate 238 each coordinate Zn(2+). Residues lysine 266–serine 270 carry the 'KMSKS' region motif. Residue lysine 269 participates in ATP binding.

Belongs to the class-I aminoacyl-tRNA synthetase family. As to quaternary structure, monomer. Requires Zn(2+) as cofactor.

Its subcellular location is the cytoplasm. The catalysed reaction is tRNA(Cys) + L-cysteine + ATP = L-cysteinyl-tRNA(Cys) + AMP + diphosphate. The protein is Cysteine--tRNA ligase of Pseudomonas putida (strain GB-1).